We begin with the raw amino-acid sequence, 286 residues long: 2-dehydro-3-deoxyphosphooctonate aldolase (286 aa).

This sequence belongs to the KdsA family.

It is found in the cytoplasm. The enzyme catalyses D-arabinose 5-phosphate + phosphoenolpyruvate + H2O = 3-deoxy-alpha-D-manno-2-octulosonate-8-phosphate + phosphate. It participates in carbohydrate biosynthesis; 3-deoxy-D-manno-octulosonate biosynthesis; 3-deoxy-D-manno-octulosonate from D-ribulose 5-phosphate: step 2/3. The protein operates within bacterial outer membrane biogenesis; lipopolysaccharide biosynthesis. This is 2-dehydro-3-deoxyphosphooctonate aldolase (kdsA) from Actinobacillus pleuropneumoniae (Haemophilus pleuropneumoniae).